The chain runs to 176 residues: Adenine phosphoribosyltransferase (176 aa).

Belongs to the purine/pyrimidine phosphoribosyltransferase family. As to quaternary structure, homodimer.

Its subcellular location is the cytoplasm. It catalyses the reaction AMP + diphosphate = 5-phospho-alpha-D-ribose 1-diphosphate + adenine. It participates in purine metabolism; AMP biosynthesis via salvage pathway; AMP from adenine: step 1/1. Its function is as follows. Catalyzes a salvage reaction resulting in the formation of AMP, that is energically less costly than de novo synthesis. This Bacteroides thetaiotaomicron (strain ATCC 29148 / DSM 2079 / JCM 5827 / CCUG 10774 / NCTC 10582 / VPI-5482 / E50) protein is Adenine phosphoribosyltransferase.